The following is a 519-amino-acid chain: uncharacterized protein (519 aa).

A run of 11 helical transmembrane segments spans residues 52-72 (IYFL…VRGS), 86-106 (LATY…SPIV), 119-139 (TWVV…SYNV), 156-176 (WSFL…GWSL), 199-219 (FFLS…NTFI), 231-251 (LSGY…LVCF), 313-333 (MLSL…VYTG), 343-363 (IWLK…ILVY), 374-394 (VFFP…IQFV), 408-430 (IGGT…PQYV), and 477-497 (TSIV…TPVV).

Its subcellular location is the membrane. This is an uncharacterized protein from Schizosaccharomyces pombe (strain 972 / ATCC 24843) (Fission yeast).